The following is a 743-amino-acid chain: Phosphoribosylformylglycinamidine synthase subunit PurL (743 aa).

The active site involves His53. Positions 56 and 95 each coordinate ATP. A Mg(2+)-binding site is contributed by Glu97. Substrate is bound by residues 98–101 and Arg120; that span reads SHNH. Catalysis depends on His99, which acts as the Proton acceptor. Asp121 contacts Mg(2+). Gln245 contributes to the substrate binding site. A Mg(2+)-binding site is contributed by Asp275. Position 319-321 (319-321) interacts with substrate; the sequence is ESQ. The ATP site is built by Asp502 and Gly539. Mg(2+) is bound at residue Asn540. Position 542 (Ser542) interacts with substrate.

Belongs to the FGAMS family. As to quaternary structure, monomer. Part of the FGAM synthase complex composed of 1 PurL, 1 PurQ and 2 PurS subunits.

It localises to the cytoplasm. It catalyses the reaction N(2)-formyl-N(1)-(5-phospho-beta-D-ribosyl)glycinamide + L-glutamine + ATP + H2O = 2-formamido-N(1)-(5-O-phospho-beta-D-ribosyl)acetamidine + L-glutamate + ADP + phosphate + H(+). The protein operates within purine metabolism; IMP biosynthesis via de novo pathway; 5-amino-1-(5-phospho-D-ribosyl)imidazole from N(2)-formyl-N(1)-(5-phospho-D-ribosyl)glycinamide: step 1/2. In terms of biological role, part of the phosphoribosylformylglycinamidine synthase complex involved in the purines biosynthetic pathway. Catalyzes the ATP-dependent conversion of formylglycinamide ribonucleotide (FGAR) and glutamine to yield formylglycinamidine ribonucleotide (FGAM) and glutamate. The FGAM synthase complex is composed of three subunits. PurQ produces an ammonia molecule by converting glutamine to glutamate. PurL transfers the ammonia molecule to FGAR to form FGAM in an ATP-dependent manner. PurS interacts with PurQ and PurL and is thought to assist in the transfer of the ammonia molecule from PurQ to PurL. This Lactobacillus helveticus (strain DPC 4571) protein is Phosphoribosylformylglycinamidine synthase subunit PurL.